The chain runs to 237 residues: MNVFDRNINFDSLFKFSQISHSTQVHLKNVYSSLAVCMFVAAAGSYVHVVTRLFQGGMLSVLGSLGMMFWLAMTPHNSETEKKRLAILAGFAFLTGVGLCPTLDFVIAINPSIIVTAFLGTSVIFVCFTLSALYAKRRSYLFLGGTLMSGLSILFLMSMMNMFFGSVMLFKAHMYLGLLIMCGFVLXDTQLIIEKAENGDKDYVWHSVDLFLDFITIFRKLMVILALNDKDKKKEKK.

Residues 1 to 29 are Cytoplasmic-facing; sequence MNVFDRNINFDSLFKFSQISHSTQVHLKN. Residues 30-50 traverse the membrane as a helical segment; it reads VYSSLAVCMFVAAAGSYVHVV. Residues 51–52 are Lumenal-facing; it reads TR. A helical membrane pass occupies residues 53–73; the sequence is LFQGGMLSVLGSLGMMFWLAM. The Cytoplasmic portion of the chain corresponds to 74 to 86; the sequence is TPHNSETEKKRLA. The chain crosses the membrane as a helical span at residues 87–107; that stretch reads ILAGFAFLTGVGLCPTLDFVI. Residues 108–112 are Lumenal-facing; sequence AINPS. A helical transmembrane segment spans residues 113 to 133; that stretch reads IIVTAFLGTSVIFVCFTLSAL. Topologically, residues 134 to 139 are cytoplasmic; it reads YAKRRS. The chain crosses the membrane as a helical span at residues 140–160; the sequence is YLFLGGTLMSGLSILFLMSMM. The Lumenal segment spans residues 161–166; that stretch reads NMFFGS. Residues 167–187 form a helical membrane-spanning segment; it reads VMLFKAHMYLGLLIMCGFVLX. The Cytoplasmic segment spans residues 188–206; that stretch reads DTQLIIEKAENGDKDYVWH. Positions 207–227 form an intramembrane region, helical; sequence SVDLFLDFITIFRKLMVILAL. Over 228–237 the chain is Cytoplasmic; the sequence is NDKDKKKEKK.

It belongs to the BI1 family. As to expression, highly abundant in testis.

The protein localises to the endoplasmic reticulum membrane. Its function is as follows. Suppressor of apoptosis. Modulates unfolded protein response signaling. Modulate ER calcium homeostasis by acting as a calcium-leak channel. This chain is Probable Bax inhibitor 1 (tmbim6), found in Paralichthys olivaceus (Bastard halibut).